Reading from the N-terminus, the 336-residue chain is Adenylate isopentenyltransferase 3, chloroplastic (336 aa).

The N-terminal 55 residues, 1 to 55 (MIMKISMAMCKQPLPPSPTLDFPPARFGPNMLTLNPYGPKDKVVVIMGATGTGKS), are a transit peptide targeting the chloroplast. 48–55 (GATGTGKS) contributes to the ATP binding site. Cysteine methyl ester is present on cysteine 333. Cysteine 333 carries S-farnesyl cysteine lipidation. The propeptide at 334 to 336 (LVA) is removed in mature form.

It belongs to the IPP transferase family. Post-translationally, farnesylated. Expressed the phloem companion cells.

The protein resides in the plastid. Its subcellular location is the chloroplast. The protein localises to the nucleus membrane. It localises to the cytoplasm. It carries out the reaction dimethylallyl diphosphate + ADP = N(6)-(dimethylallyl)adenosine 5'-diphosphate + diphosphate. The catalysed reaction is dimethylallyl diphosphate + ATP = N(6)-(dimethylallyl)adenosine 5'-triphosphate + diphosphate. Functionally, involved in cytokinin biosynthesis. Catalyzes the transfer of an isopentenyl group from dimethylallyl diphosphate (DMAPP) to ATP and ADP. The sequence is that of Adenylate isopentenyltransferase 3, chloroplastic (IPT3) from Arabidopsis thaliana (Mouse-ear cress).